Consider the following 898-residue polypeptide: Eukaryotic translation initiation factor 3 subunit C (898 aa).

Positions 1-10 (MSRFFHAKED) are enriched in basic and acidic residues. Disordered stretches follow at residues 1–38 (MSRF…DDLD) and 162–238 (VTDY…SVTK). Residues 11–23 (SDSDTSSSEDEVE) show a composition bias toward acidic residues. Positions 24–37 (DQKVNKSAKFRDDL) are enriched in basic and acidic residues. The segment covering 170 to 187 (DEDGYETPEDEDDDDFGE) has biased composition (acidic residues). Positions 189-202 (SESKAEKSPGKPSE) are enriched in basic and acidic residues. Over residues 209-218 (SDSDSDDDDS) the composition is skewed to acidic residues. Low complexity predominate over residues 219-228 (SNWSSEPESN). Residues 630-806 (YHMHINVELM…DCLIMHRVEP (177 aa)) enclose the PCI domain. The tract at residues 829–898 (QILEPRTGRG…RRHPQKPRAF (70 aa)) is disordered. Composition is skewed to basic and acidic residues over residues 850–859 (RNERQGDKQK) and 866–878 (GERR…DGKR). Basic residues predominate over residues 888–898 (QRRHPQKPRAF).

Belongs to the eIF-3 subunit C family. As to quaternary structure, component of the eukaryotic translation initiation factor 3 (eIF-3) complex.

The protein localises to the cytoplasm. Its function is as follows. Component of the eukaryotic translation initiation factor 3 (eIF-3) complex, which is involved in protein synthesis of a specialized repertoire of mRNAs and, together with other initiation factors, stimulates binding of mRNA and methionyl-tRNAi to the 40S ribosome. The eIF-3 complex specifically targets and initiates translation of a subset of mRNAs involved in cell proliferation. The polypeptide is Eukaryotic translation initiation factor 3 subunit C (Caenorhabditis elegans).